The following is a 798-amino-acid chain: Protocadherin beta-2 (798 aa).

The first 30 residues, 1-30 (MEAGEGKERVPKQRQVLIFFVLLGIAQASC), serve as a signal peptide directing secretion. At 31–692 (QPRHYSVAEE…AQADLLTVYL (662 aa)) the chain is on the extracellular side. 5 Cadherin domains span residues 37–135 (VAEE…SPVF), 136–244 (LDKE…VPEF), 249–349 (YEVQ…PPEL), 354–453 (LINQ…APAF), and 458–563 (YTLF…SPFV). Asn171 carries N-linked (GlcNAc...) asparagine glycosylation. An N6-acetyllysine modification is found at Lys299. N-linked (GlcNAc...) asparagine glycans are attached at residues Asn420 and Asn438. The N-linked (GlcNAc...) asparagine glycan is linked to Asn569. In terms of domain architecture, Cadherin 6 spans 570–673 (GSAPCTELVP…LVDGFSQPYL (104 aa)). A helical membrane pass occupies residues 693–713 (VVALASVSSLFLFSVLLFVAV). The Cytoplasmic segment spans residues 714-798 (RLCRRSRAAS…PSFRKSFEFT (85 aa)).

The protein localises to the cell membrane. Functionally, potential calcium-dependent cell-adhesion protein. May be involved in the establishment and maintenance of specific neuronal connections in the brain. This Homo sapiens (Human) protein is Protocadherin beta-2 (PCDHB2).